A 364-amino-acid chain; its full sequence is 3-dehydroquinate synthase (364 aa).

NAD(+) contacts are provided by residues 105-109 (GVVGD), 129-130 (TT), Lys142, and Lys151. Zn(2+) contacts are provided by Glu184, His247, and His264.

The protein belongs to the sugar phosphate cyclases superfamily. Dehydroquinate synthase family. Co(2+) serves as cofactor. It depends on Zn(2+) as a cofactor. Requires NAD(+) as cofactor.

It is found in the cytoplasm. It carries out the reaction 7-phospho-2-dehydro-3-deoxy-D-arabino-heptonate = 3-dehydroquinate + phosphate. It functions in the pathway metabolic intermediate biosynthesis; chorismate biosynthesis; chorismate from D-erythrose 4-phosphate and phosphoenolpyruvate: step 2/7. Catalyzes the conversion of 3-deoxy-D-arabino-heptulosonate 7-phosphate (DAHP) to dehydroquinate (DHQ). This chain is 3-dehydroquinate synthase, found in Acidithiobacillus ferrooxidans (strain ATCC 23270 / DSM 14882 / CIP 104768 / NCIMB 8455) (Ferrobacillus ferrooxidans (strain ATCC 23270)).